The chain runs to 276 residues: NAD-capped RNA hydrolase NudC (276 aa).

Arg82 is a substrate binding site. Cys112 and Cys115 together coordinate Zn(2+). Glu125 is a binding site for substrate. Residues Cys130 and Cys133 each coordinate Zn(2+). Position 138 (Tyr138) interacts with substrate. The region spanning 139 to 262 (PRISPSMIVL…SIARYLIDLY (124 aa)) is the Nudix hydrolase domain. Residues Ala172, Glu188, and Glu192 each coordinate a divalent metal cation. Residues 173–194 (GFAEPGESAEDCLVREVREEVA) carry the Nudix box motif. Position 206-213 (206-213 (QCWPFPHS)) interacts with substrate. Glu233 lines the a divalent metal cation pocket. Ala255 contacts substrate.

Belongs to the Nudix hydrolase family. NudC subfamily. As to quaternary structure, homodimer. Requires Mg(2+) as cofactor. It depends on Mn(2+) as a cofactor. Zn(2+) serves as cofactor.

It carries out the reaction a 5'-end NAD(+)-phospho-ribonucleoside in mRNA + H2O = a 5'-end phospho-adenosine-phospho-ribonucleoside in mRNA + beta-nicotinamide D-ribonucleotide + 2 H(+). The catalysed reaction is NAD(+) + H2O = beta-nicotinamide D-ribonucleotide + AMP + 2 H(+). The enzyme catalyses NADH + H2O = reduced beta-nicotinamide D-ribonucleotide + AMP + 2 H(+). Its function is as follows. mRNA decapping enzyme that specifically removes the nicotinamide adenine dinucleotide (NAD) cap from a subset of mRNAs by hydrolyzing the diphosphate linkage to produce nicotinamide mononucleotide (NMN) and 5' monophosphate mRNA. The NAD-cap is present at the 5'-end of some mRNAs and stabilizes RNA against 5'-processing. Has preference for mRNAs with a 5'-end purine. Catalyzes the hydrolysis of a broad range of dinucleotide pyrophosphates. The sequence is that of NAD-capped RNA hydrolase NudC from Pseudomonas putida (strain ATCC 47054 / DSM 6125 / CFBP 8728 / NCIMB 11950 / KT2440).